Consider the following 721-residue polypeptide: MSTILQTTDSASQVYALEITCPLGLENVLEKELHGEGLTQTRLGEAQVKLTTDLEGMYKACLWSRVATRVMLPIANFKMESADDLYDGVKAIQWSDHMNASNTIAIDCHGTNHHIRNTQFGAVRAKDAIADYFVALSGERPSVEKEQPEVRIALRIKREVVTVSIDLSGESMHRRGYRQQGGMAPLKENLAAGLLLRAGWGTDCGLTQLIDPMCGSGTFLVEAAMMSLDMAPGLRRPYWGFKGWKQHDHRMWQQLMDFAKNRKKDPATLGIRFQGTDREQKAIAAARENIKRAGLTDVIDVTMSSFQEHEFDINPDAPGLLITNPPYGERIGDEMALIALYRQLGEWVVTHVRGWQFMMLTSNDHLARQIPVRPEKSTRVINGGIECRAYQFPLLAGSIKEDVVAQSVMTPGAQMFANRLQKNAKKLKKWVEKNKIQCYRVYDADMPEYSVAIDIYGNWAHVQEYQAPKSIDPEKAKQRLFEVMSAIPTALNISESNVILKQRQRQTGKEQYEKFDQTKHEMIVEEYGCEFIVNLKDYLDTGLFLDHRPVRKLIQDKANGVRFLNLFCYTATASVHAGQGGARSSLSVDMSNTYTEWARRNIELNEFSDRYHQVERADCIEWLKQSRDKFDLIFMDPPTFSNSKKMADILDIQRDHGELVRLAMARLARGGELIFSNNYRRFVLDEALEQEYDVKNITRETLDPDFDRNDKIHQCYIIKNK.

Positions 56 to 167 constitute a THUMP domain; that stretch reads GMYKACLWSR…REVVTVSIDL (112 aa).

It belongs to the methyltransferase superfamily. RlmKL family.

The protein localises to the cytoplasm. The enzyme catalyses guanosine(2445) in 23S rRNA + S-adenosyl-L-methionine = N(2)-methylguanosine(2445) in 23S rRNA + S-adenosyl-L-homocysteine + H(+). The catalysed reaction is guanosine(2069) in 23S rRNA + S-adenosyl-L-methionine = N(2)-methylguanosine(2069) in 23S rRNA + S-adenosyl-L-homocysteine + H(+). Functionally, specifically methylates the guanine in position 2445 (m2G2445) and the guanine in position 2069 (m7G2069) of 23S rRNA. In Marinomonas sp. (strain MWYL1), this protein is Ribosomal RNA large subunit methyltransferase K/L.